We begin with the raw amino-acid sequence, 390 residues long: Sorting nexin C1711.11 (390 aa).

The PX domain maps to 1–123; it reads MLKCTIKNEQ…QFLENNSWKS (123 aa). Positions 44, 70, and 89 each coordinate a 1,2-diacyl-sn-glycero-3-phospho-(1D-myo-inositol-3-phosphate).

This sequence belongs to the sorting nexin family.

It is found in the cytoplasm. The protein resides in the membrane. This Schizosaccharomyces pombe (strain 972 / ATCC 24843) (Fission yeast) protein is Sorting nexin C1711.11.